A 544-amino-acid chain; its full sequence is Chaperonin GroEL 1 (544 aa).

Residues 30 to 33, 87 to 91, glycine 415, 480 to 482, and aspartate 496 contribute to the ATP site; these read TLGP, DGTTT, and NAA.

The protein belongs to the chaperonin (HSP60) family. Forms a cylinder of 14 subunits composed of two heptameric rings stacked back-to-back. Interacts with the co-chaperonin GroES.

It is found in the cytoplasm. It carries out the reaction ATP + H2O + a folded polypeptide = ADP + phosphate + an unfolded polypeptide.. Together with its co-chaperonin GroES, plays an essential role in assisting protein folding. The GroEL-GroES system forms a nano-cage that allows encapsulation of the non-native substrate proteins and provides a physical environment optimized to promote and accelerate protein folding. This Polaromonas naphthalenivorans (strain CJ2) protein is Chaperonin GroEL 1.